The following is a 1014-amino-acid chain: Isoleucine--tRNA ligase (1014 aa).

The short motif at 48–58 is the 'HIGH' region element; it reads PTANGRPGIHH. The 'KMSKS' region signature appears at 628–632; that stretch reads KMSKS. K631 provides a ligand contact to ATP.

Belongs to the class-I aminoacyl-tRNA synthetase family. IleS type 2 subfamily. Monomer. It depends on Zn(2+) as a cofactor.

Its subcellular location is the cytoplasm. It carries out the reaction tRNA(Ile) + L-isoleucine + ATP = L-isoleucyl-tRNA(Ile) + AMP + diphosphate. Functionally, catalyzes the attachment of isoleucine to tRNA(Ile). As IleRS can inadvertently accommodate and process structurally similar amino acids such as valine, to avoid such errors it has two additional distinct tRNA(Ile)-dependent editing activities. One activity is designated as 'pretransfer' editing and involves the hydrolysis of activated Val-AMP. The other activity is designated 'posttransfer' editing and involves deacylation of mischarged Val-tRNA(Ile). The chain is Isoleucine--tRNA ligase from Dehalococcoides mccartyi (strain CBDB1).